The following is a 114-amino-acid chain: Putative neurotoxin 7 (114 aa).

It belongs to the scolopendra neurotoxin 8 family. In terms of processing, contains 3 disulfide bonds. Expressed by the venom gland.

The protein resides in the secreted. The polypeptide is Putative neurotoxin 7 (Scolopendra mutilans (Chinese red-headed centipede)).